Reading from the N-terminus, the 564-residue chain is Plant UBX domain-containing protein 8 (564 aa).

At alanine 2 the chain carries N-acetylalanine. Positions alanine 2–glutamate 44 constitute a UBA-like domain. 2 UIM domains span residues isoleucine 198 to serine 217 and glutamate 230 to glutamate 249. The interval serine 210–methionine 229 is disordered. Disordered regions lie at residues alanine 267–aspartate 358, isoleucine 371–methionine 423, and phenylalanine 443–glutamate 483. Residues phenylalanine 291 to glutamate 300 are compositionally biased toward acidic residues. Phosphoserine is present on residues serine 295, serine 324, serine 326, and serine 328. Positions aspartate 322–alanine 334 are enriched in basic and acidic residues. Positions phenylalanine 381–proline 395 are enriched in pro residues. Positions valine 412 to glutamate 478 form a coiled coil. The span at phenylalanine 443–leucine 475 shows a compositional bias: basic and acidic residues. The UBX domain occupies aspartate 482 to phenylalanine 560.

Interacts with RABA5C/ARA-4.

The polypeptide is Plant UBX domain-containing protein 8 (Arabidopsis thaliana (Mouse-ear cress)).